Reading from the N-terminus, the 127-residue chain is Protein chibby homolog 1 (127 aa).

A disordered region spans residues 1–25 (MPLFGSIFSPKKTPPRKSASLSNLH). Phosphoserine is present on residues S9 and S20. Residues 60–112 (VADSVISGGVDRRETQRLRKRNQQLEEENNLLRLKVDILLDMLSETTAESHLK) are minimal region for the interaction with PKD2. Residues 68–110 (GVDRRETQRLRKRNQQLEEENNLLRLKVDILLDMLSETTAESH) are a coiled coil. The interval 77 to 98 (LRKRNQQLEEENNLLRLKVDIL) is leucine-zipper; mediates homodimerization.

The protein belongs to the chibby family. In terms of assembly, homodimer. Homodimerization is essential for nuclear localization and interaction with KPNA4 but is dispensable for interaction with CTNNB1. Interacts with polycystin-2/PKD2 and GM130. Interacts with the C-terminal region of CTNNB1. Interacts (C-terminus) with TCIM (C-terminus), TCIM competes with CTNNB1 for the interaction with CBY1. Interacts with FAM92A; this interaction facilitates targeting of FAM92A to cilium basal body. Interacts with CIBAR2. Interacts with KPNA4. As to expression, found in heart, brain, lung, liver, muscle, kidney and testis. Levels are approximately 3-fold higher in embryonic and adult heart than in lung or liver.

It localises to the nucleus speckle. It is found in the cytoplasm. Its subcellular location is the cytoskeleton. The protein localises to the cilium basal body. The protein resides in the microtubule organizing center. It localises to the centrosome. It is found in the centriole. Its subcellular location is the golgi apparatus. The protein localises to the trans-Golgi network. The protein resides in the cell projection. It localises to the cilium. It is found in the flagellum. Its subcellular location is the nucleus. Functionally, inhibits the Wnt/Wingless pathway by binding to CTNNB1/beta-catenin and inhibiting beta-catenin-mediated transcriptional activation through competition with TCF/LEF transcription factors. Has also been shown to play a role in regulating the intracellular trafficking of polycystin-2/PKD2 and possibly of other intracellular proteins. Promotes adipocyte and cardiomyocyte differentiation. The protein is Protein chibby homolog 1 (Cby1) of Mus musculus (Mouse).